Here is a 273-residue protein sequence, read N- to C-terminus: Formamidopyrimidine-DNA glycosylase (273 aa).

Residue Pro2 is the Schiff-base intermediate with DNA of the active site. Glu3 acts as the Proton donor in catalysis. Lys57 serves as the catalytic Proton donor; for beta-elimination activity. 3 residues coordinate DNA: His91, Arg110, and Lys151. The FPG-type zinc-finger motif lies at 236-270 (QVYGRKDEACNDCGTIIEAKVIGQRNSYFCPHCQM). The active-site Proton donor; for delta-elimination activity is the Arg260.

This sequence belongs to the FPG family. As to quaternary structure, monomer. Zn(2+) is required as a cofactor.

The enzyme catalyses Hydrolysis of DNA containing ring-opened 7-methylguanine residues, releasing 2,6-diamino-4-hydroxy-5-(N-methyl)formamidopyrimidine.. It carries out the reaction 2'-deoxyribonucleotide-(2'-deoxyribose 5'-phosphate)-2'-deoxyribonucleotide-DNA = a 3'-end 2'-deoxyribonucleotide-(2,3-dehydro-2,3-deoxyribose 5'-phosphate)-DNA + a 5'-end 5'-phospho-2'-deoxyribonucleoside-DNA + H(+). In terms of biological role, involved in base excision repair of DNA damaged by oxidation or by mutagenic agents. Acts as a DNA glycosylase that recognizes and removes damaged bases. Has a preference for oxidized purines, such as 7,8-dihydro-8-oxoguanine (8-oxoG). Has AP (apurinic/apyrimidinic) lyase activity and introduces nicks in the DNA strand. Cleaves the DNA backbone by beta-delta elimination to generate a single-strand break at the site of the removed base with both 3'- and 5'-phosphates. The protein is Formamidopyrimidine-DNA glycosylase of Actinobacillus pleuropneumoniae serotype 3 (strain JL03).